The following is a 557-amino-acid chain: Potassium-transporting ATPase potassium-binding subunit (557 aa).

A run of 12 helical transmembrane segments spans residues 5-25 (GFLL…PLGS), 63-83 (LCAI…MLLG), 132-152 (GLTV…FAFI), 170-190 (LLRI…LFFI), 253-273 (FVQM…FGEV), 283-303 (LLWA…WAEV), 329-349 (VLVS…AVIA), 356-376 (ALGG…FGGV), 379-399 (GLYG…LMIG), 416-436 (LTAL…ALAM), 484-504 (LLAF…MAIA), and 526-546 (LFVG…FIPA).

This sequence belongs to the KdpA family. As to quaternary structure, the system is composed of three essential subunits: KdpA, KdpB and KdpC.

It is found in the cell inner membrane. Part of the high-affinity ATP-driven potassium transport (or Kdp) system, which catalyzes the hydrolysis of ATP coupled with the electrogenic transport of potassium into the cytoplasm. This subunit binds the periplasmic potassium ions and delivers the ions to the membrane domain of KdpB through an intramembrane tunnel. This Shigella boydii serotype 4 (strain Sb227) protein is Potassium-transporting ATPase potassium-binding subunit.